A 467-amino-acid polypeptide reads, in one-letter code: Receptor-like cytosolic serine/threonine-protein kinase RBK1 (467 aa).

Positions M1–L24 are enriched in basic and acidic residues. The disordered stretch occupies residues M1 to S73. Low complexity predominate over residues S40–T71. T142 carries the phosphothreonine modification. A Protein kinase domain is found at F153–L430. Residues I159–V167 and K181 each bind ATP. The active-site Proton acceptor is the D278. S282 is subject to Phosphoserine. A Phosphothreonine modification is found at T318. The residue at position 326 (Y326) is a Phosphotyrosine.

This sequence belongs to the protein kinase superfamily. Ser/Thr protein kinase family. Interacts with ARAC5 and ARAC10. In terms of tissue distribution, mostly expressed in vasculature, hydathode endothem, leaf mesophyll cells and trichomes.

Its subcellular location is the cytoplasm. The protein localises to the endomembrane system. It localises to the nucleus. The catalysed reaction is L-seryl-[protein] + ATP = O-phospho-L-seryl-[protein] + ADP + H(+). The enzyme catalyses L-threonyl-[protein] + ATP = O-phospho-L-threonyl-[protein] + ADP + H(+). In Arabidopsis thaliana (Mouse-ear cress), this protein is Receptor-like cytosolic serine/threonine-protein kinase RBK1 (RBK1).